A 642-amino-acid polypeptide reads, in one-letter code: Threonine--tRNA ligase (642 aa).

In terms of domain architecture, TGS spans 1-61 (MPVITLPDGS…ESDAQLAIIT (61 aa)). Residues 243–534 (DHRKIGKQLD…LTEEYAGFFP (292 aa)) form a catalytic region. Zn(2+) is bound by residues Cys-334, His-385, and His-511.

This sequence belongs to the class-II aminoacyl-tRNA synthetase family. As to quaternary structure, homodimer. The cofactor is Zn(2+).

Its subcellular location is the cytoplasm. It carries out the reaction tRNA(Thr) + L-threonine + ATP = L-threonyl-tRNA(Thr) + AMP + diphosphate + H(+). Catalyzes the attachment of threonine to tRNA(Thr) in a two-step reaction: L-threonine is first activated by ATP to form Thr-AMP and then transferred to the acceptor end of tRNA(Thr). Also edits incorrectly charged L-seryl-tRNA(Thr). This is Threonine--tRNA ligase from Yersinia enterocolitica serotype O:8 / biotype 1B (strain NCTC 13174 / 8081).